Here is a 410-residue protein sequence, read N- to C-terminus: Dipeptidase 1 (410 aa).

An N-terminal signal peptide occupies residues 1–16 (MWTGWWLWPLVAVCTA). The Zn(2+) site is built by His36 and Asp38. 2 N-linked (GlcNAc...) asparagine glycosylation sites follow: Asn57 and Asn62. Cys87 and Cys170 form a disulfide bridge. Glu141 is a Zn(2+) binding site. A substrate-binding site is contributed by His168. 2 residues coordinate Zn(2+): His214 and His235. The cysteines at positions 242 and 274 are disulfide-linked. Substrate is bound at residue Arg246. N-linked (GlcNAc...) asparagine glycosylation occurs at Asn279. Substrate is bound at residue Asp304. Residue Ser384 is the site of GPI-anchor amidated serine attachment. A propeptide spans 385-410 (GAPSLHLQPGTLLASLVTLLLSLCLL) (removed in mature form).

Belongs to the metallo-dependent hydrolases superfamily. Peptidase M19 family. In terms of assembly, homodimer; disulfide-linked. Requires Zn(2+) as cofactor.

It is found in the apical cell membrane. It carries out the reaction an L-aminoacyl-L-amino acid + H2O = 2 an L-alpha-amino acid. It catalyses the reaction leukotriene D4 + H2O = leukotriene E4 + glycine. The catalysed reaction is L-cystine-bis-glycine + 2 H2O = L-cystine + 2 glycine. The enzyme catalyses a beta-lactam + H2O = a substituted beta-amino acid. It carries out the reaction glycyldehydrophenylalanine + H2O = 2,3-didehydrophenylalanine + glycine. Its activity is regulated as follows. Inhibited by L-penicillamine. Inhibited by cilastatin. Functionally, hydrolyzes a wide range of dipeptides including the conversion of leukotriene D4 to leukotriene E4. Hydrolyzes cystinyl-bis-glycine (cys-bis-gly) formed during glutathione degradation. Also possesses beta lactamase activity and hydrolytically inactivates beta-lactam antibiotics. Independently of its dipeptidase activity, acts as an adhesion receptor for neutrophil recruitment from bloodstream into inflamed lungs and liver. In Bos taurus (Bovine), this protein is Dipeptidase 1 (DPEP1).